A 405-amino-acid polypeptide reads, in one-letter code: Na(+)-translocating NADH-quinone reductase subunit F (405 aa).

A helical membrane pass occupies residues 3 to 23; it reads IILGIVMFTVIVLVLALMILF. Positions 32 to 124 constitute a 2Fe-2S ferredoxin-type domain; it reads GDITIKVNGE…DMDIEVPEEV (93 aa). [2Fe-2S] cluster-binding residues include Cys67, Cys73, Cys76, and Cys108. The 141-residue stretch at 127-267 folds into the FAD-binding FR-type domain; the sequence is VKKWECTVIS…SGPFGEFFAK (141 aa).

Belongs to the NqrF family. Composed of six subunits; NqrA, NqrB, NqrC, NqrD, NqrE and NqrF. Requires [2Fe-2S] cluster as cofactor. FAD is required as a cofactor.

It is found in the cell inner membrane. The enzyme catalyses a ubiquinone + n Na(+)(in) + NADH + H(+) = a ubiquinol + n Na(+)(out) + NAD(+). Functionally, NQR complex catalyzes the reduction of ubiquinone-1 to ubiquinol by two successive reactions, coupled with the transport of Na(+) ions from the cytoplasm to the periplasm. The first step is catalyzed by NqrF, which accepts electrons from NADH and reduces ubiquinone-1 to ubisemiquinone by a one-electron transfer pathway. The sequence is that of Na(+)-translocating NADH-quinone reductase subunit F from Neisseria meningitidis serogroup C / serotype 2a (strain ATCC 700532 / DSM 15464 / FAM18).